The sequence spans 129 residues: Succinate dehydrogenase assembly factor 3, mitochondrial (129 aa).

A mitochondrion-targeting transit peptide spans 1–21; it reads MQVNHLLRQAVKQTTRAGRLG.

It belongs to the complex I LYR family. SDHAF3 subfamily. Interacts with the iron-sulfur protein subunit within the SDH catalytic dimer.

Its subcellular location is the mitochondrion matrix. Functionally, plays an essential role in the assembly of succinate dehydrogenase (SDH), an enzyme complex (also referred to as respiratory complex II) that is a component of both the tricarboxylic acid (TCA) cycle and the mitochondrial electron transport chain, and which couples the oxidation of succinate to fumarate with the reduction of ubiquinone (coenzyme Q) to ubiquinol. Promotes maturation of the iron-sulfur protein subunit of the SDH catalytic dimer, protecting it from the deleterious effects of oxidants. May act together with SDHAF1. This is Succinate dehydrogenase assembly factor 3, mitochondrial from Kluyveromyces lactis (strain ATCC 8585 / CBS 2359 / DSM 70799 / NBRC 1267 / NRRL Y-1140 / WM37) (Yeast).